A 27-amino-acid polypeptide reads, in one-letter code: Conotoxin as14a (27 aa).

2 disulfide bridges follow: Cys-6–Cys-26 and Cys-10–Cys-22.

The protein belongs to the conotoxin L superfamily. In terms of tissue distribution, expressed by the venom duct.

Its subcellular location is the secreted. Functionally, in vivo, intracranial injection, elicits scratching and grooming activity in mice. This is Conotoxin as14a from Conus cancellatus (Cancellate cone).